The chain runs to 578 residues: Protein RIK (578 aa).

Positions 1-34 are disordered; sequence MTEDNDEARVPLSDSSTTNDASRTRQRRKRKWDK. The KH domain occupies 206–273; sequence SSNVAARIRG…KSIDDAKRLA (68 aa). A compositionally biased stretch (polar residues) spans 413-425; sequence ATSLSIPSDNASN. Residues 413–578 form a disordered region; it reads ATSLSIPSDN…DPDEPLTTRS (166 aa). A compositionally biased stretch (pro residues) spans 472-492; sequence PPSPRSVMPPPPPKTIAPPPS. Low complexity-rich tracts occupy residues 493 to 503 and 510 to 521; these read KTMSPPSSKSM and SKTMSPLSSKSM. Positions 560 to 572 are enriched in acidic residues; that stretch reads YGDDEDDDDDPDE.

Interacts with AS1. Expressed in vegetative tissues.

The protein localises to the nucleus. The sequence is that of Protein RIK (RIK) from Arabidopsis thaliana (Mouse-ear cress).